The following is a 239-amino-acid chain: Ribosomal RNA small subunit methyltransferase G (239 aa).

Residues Gly77, Phe82, 128 to 129 (AE), and Arg147 contribute to the S-adenosyl-L-methionine site. Residues 219–239 (KNTPKKYPRKPGTPNKSPIEG) are disordered.

This sequence belongs to the methyltransferase superfamily. RNA methyltransferase RsmG family.

Its subcellular location is the cytoplasm. Functionally, specifically methylates the N7 position of guanine in position 535 of 16S rRNA. The polypeptide is Ribosomal RNA small subunit methyltransferase G (Bacillus subtilis (strain 168)).